A 719-amino-acid chain; its full sequence is Glutamate--tRNA ligase, cytoplasmic (719 aa).

ATP is bound at residue S93. The tract at residues 176-205 (SGKPVAAPKSKDSQQAVKGDGQDKGKPEVD) is disordered. A compositionally biased stretch (basic and acidic residues) spans 195-204 (DGQDKGKPEV). 217-219 (RFA) provides a ligand contact to L-glutamate. Positions 220–230 (PEPSGYLHIGH) match the 'HIGH' region motif. H227 provides a ligand contact to ATP. Residues 393-397 (YDFAC) and R411 each bind L-glutamate. Residues E414 and 448-452 (LLSKR) each bind ATP. The short motif at 448–452 (LLSKR) is the 'KMSKS' region element.

The protein belongs to the class-I aminoacyl-tRNA synthetase family. Glutamate--tRNA ligase type 2 subfamily. Interacts with GLN2, COL4 and RPP13L4/ZAR1.

It is found in the cytoplasm. It localises to the cytosol. It catalyses the reaction tRNA(Glu) + L-glutamate + ATP = L-glutamyl-tRNA(Glu) + AMP + diphosphate. In terms of biological role, catalyzes the attachment of glutamate to tRNA(Glu) in a two-step reaction: glutamate is first activated by ATP to form Glu-AMP and then transferred to the acceptor end of tRNA(Glu). The sequence is that of Glutamate--tRNA ligase, cytoplasmic from Arabidopsis thaliana (Mouse-ear cress).